The primary structure comprises 905 residues: Clumping factor B (905 aa).

Positions 1 to 44 (MKKRIDYLSNKQNKYSIRRFTVGTTSVIVGATILFGIGNHQAQA) are cleaved as a signal peptide. The YSIRK-G/S signaling motif signature appears at 15–26 (YSIRRFTVGTTS). 2 stretches are compositionally biased toward polar residues: residues 44-61 (ASEQ…NASA) and 68-101 (MIET…KPMS). A disordered region spans residues 44–191 (ASEQSNDTTQ…AQGTSKPSVR (148 aa)). The segment at 45–542 (SEQSNDTTQS…GSADGDSAVN (498 aa)) is ligand binding A region. Low complexity predominate over residues 102–119 (TQTSNTTTTEPASTNETP). The segment covering 134-189 (QDQTVPQEANSQVDNKTTNDANSIATNSELKNPQTLDLPQSSPQTISNAQGTSKPS) has biased composition (polar residues). An MIDAS-like motif motif is present at residues 272–276 (DYSNS). The tract at residues 530–877 (YGGGSADGDS…ETGDKSENTN (348 aa)) is disordered. A compositionally biased stretch (pro residues) spans 545–555 (DPTPGPPVDPE). Acidic residues predominate over residues 556–829 (PSPDPEPEPS…SDSDSDSDSD (274 aa)). Positions 833–844 (RVTPPNNEQKAP) are enriched in polar residues. The segment covering 861-874 (HKTDALPETGDKSE) has biased composition (basic and acidic residues). The LPXTG sorting signal motif lies at 866 to 870 (LPETG). Threonine 869 carries the pentaglycyl murein peptidoglycan amidated threonine modification. Positions 870 to 905 (GDKSENTNATLFGAMMALLGSLLLFRKRKQDHKEKA) are cleaved as a propeptide — removed by sortase.

This sequence belongs to the serine-aspartate repeat-containing protein (SDr) family. Proteolytically cleaved by aureolysin (aur). This cleavage leads to the inactivation of ClfB.

The protein resides in the secreted. The protein localises to the cell wall. Cell surface-associated protein implicated in virulence by promoting bacterial attachment to both alpha- and beta-chains of human fibrinogen and inducing the formation of bacterial clumps. The chain is Clumping factor B (clfB) from Staphylococcus aureus (strain MSSA476).